The chain runs to 26 residues: Omega-conotoxin TVIA (26 aa).

Disulfide bonds link Cys-1–Cys-16, Cys-8–Cys-19, and Cys-15–Cys-26. 4-hydroxyproline is present on residues Pro-4, Pro-10, and Pro-21.

It belongs to the conotoxin O1 superfamily. As to expression, expressed by the venom duct.

The protein localises to the secreted. Functionally, omega-conotoxins act at presynaptic membranes, they bind and block voltage-gated calcium channels (Cav). In Conus tulipa (Fish-hunting cone snail), this protein is Omega-conotoxin TVIA.